Consider the following 731-residue polypeptide: 1,4-alpha-glucan branching enzyme GlgB (731 aa).

The active-site Nucleophile is the aspartate 412. Glutamate 465 functions as the Proton donor in the catalytic mechanism.

It belongs to the glycosyl hydrolase 13 family. GlgB subfamily. As to quaternary structure, monomer.

It carries out the reaction Transfers a segment of a (1-&gt;4)-alpha-D-glucan chain to a primary hydroxy group in a similar glucan chain.. It functions in the pathway glycan biosynthesis; glycogen biosynthesis. Functionally, catalyzes the formation of the alpha-1,6-glucosidic linkages in glycogen by scission of a 1,4-alpha-linked oligosaccharide from growing alpha-1,4-glucan chains and the subsequent attachment of the oligosaccharide to the alpha-1,6 position. The chain is 1,4-alpha-glucan branching enzyme GlgB from Bordetella parapertussis (strain 12822 / ATCC BAA-587 / NCTC 13253).